The chain runs to 130 residues: Holo-[acyl-carrier-protein] synthase (130 aa).

Mg(2+) is bound by residues D9 and E58.

It belongs to the P-Pant transferase superfamily. AcpS family. It depends on Mg(2+) as a cofactor.

The protein localises to the cytoplasm. The enzyme catalyses apo-[ACP] + CoA = holo-[ACP] + adenosine 3',5'-bisphosphate + H(+). Its function is as follows. Transfers the 4'-phosphopantetheine moiety from coenzyme A to a Ser of acyl-carrier-protein. The protein is Holo-[acyl-carrier-protein] synthase of Mycobacterium marinum (strain ATCC BAA-535 / M).